The chain runs to 197 residues: Holliday junction branch migration complex subunit RuvA (197 aa).

Residues Met-1–Val-63 form a domain I region. Residues Asn-64 to Leu-142 are domain II. Residues Leu-142–Pro-146 form a flexible linker region. A domain III region spans residues Ala-147–Lys-197.

This sequence belongs to the RuvA family. Homotetramer. Forms an RuvA(8)-RuvB(12)-Holliday junction (HJ) complex. HJ DNA is sandwiched between 2 RuvA tetramers; dsDNA enters through RuvA and exits via RuvB. An RuvB hexamer assembles on each DNA strand where it exits the tetramer. Each RuvB hexamer is contacted by two RuvA subunits (via domain III) on 2 adjacent RuvB subunits; this complex drives branch migration. In the full resolvosome a probable DNA-RuvA(4)-RuvB(12)-RuvC(2) complex forms which resolves the HJ.

The protein localises to the cytoplasm. Its function is as follows. The RuvA-RuvB-RuvC complex processes Holliday junction (HJ) DNA during genetic recombination and DNA repair, while the RuvA-RuvB complex plays an important role in the rescue of blocked DNA replication forks via replication fork reversal (RFR). RuvA specifically binds to HJ cruciform DNA, conferring on it an open structure. The RuvB hexamer acts as an ATP-dependent pump, pulling dsDNA into and through the RuvAB complex. HJ branch migration allows RuvC to scan DNA until it finds its consensus sequence, where it cleaves and resolves the cruciform DNA. The chain is Holliday junction branch migration complex subunit RuvA from Lactococcus lactis subsp. cremoris (strain MG1363).